A 203-amino-acid polypeptide reads, in one-letter code: Ribosomal RNA large subunit methyltransferase E (203 aa).

The S-adenosyl-L-methionine site is built by G60, W62, D79, D95, and D119. Catalysis depends on K159, which acts as the Proton acceptor.

Belongs to the class I-like SAM-binding methyltransferase superfamily. RNA methyltransferase RlmE family.

It localises to the cytoplasm. The catalysed reaction is uridine(2552) in 23S rRNA + S-adenosyl-L-methionine = 2'-O-methyluridine(2552) in 23S rRNA + S-adenosyl-L-homocysteine + H(+). Its function is as follows. Specifically methylates the uridine in position 2552 of 23S rRNA at the 2'-O position of the ribose in the fully assembled 50S ribosomal subunit. The chain is Ribosomal RNA large subunit methyltransferase E from Pelagibacter ubique (strain HTCC1062).